Reading from the N-terminus, the 109-residue chain is Nucleoid-associated protein Sputw3181_1707 (109 aa).

This sequence belongs to the YbaB/EbfC family. In terms of assembly, homodimer.

Its subcellular location is the cytoplasm. The protein localises to the nucleoid. Its function is as follows. Binds to DNA and alters its conformation. May be involved in regulation of gene expression, nucleoid organization and DNA protection. This chain is Nucleoid-associated protein Sputw3181_1707, found in Shewanella sp. (strain W3-18-1).